A 338-amino-acid polypeptide reads, in one-letter code: DNA-directed RNA polymerase I subunit RPA43 (338 aa).

Residues 209–338 form a disordered region; the sequence is EVSEEVTENG…PKRKGKSNFL (130 aa). Residues S242, S304, and S316 each carry the phosphoserine modification. A Phosphothreonine modification is found at T322. Phosphoserine is present on S328. Over residues 328–338 the composition is skewed to basic residues; that stretch reads SPKRKGKSNFL.

The protein belongs to the eukaryotic RPA43 RNA polymerase subunit family. In terms of assembly, component of the RNA polymerase I (Pol I) complex consisting of 13 subunits: a ten-subunit catalytic core composed of POLR1A/RPA1, POLR1B/RPA2, POLR1C/RPAC1, POLR1D/RPAC2, POLR1H/RPA12, POLR2E/RPABC1, POLR2F/RPABC2, POLR2H/RPABC3, POLR2K/RPABC4 and POLR2L/RPABC5; a mobile stalk subunit POLR1F/RPA43 protruding from the core and additional subunits homologous to general transcription factors POLR1E/RPA49 and POLR1G/RPA34. Interacts with RRN3/TIF-IA. As to expression, widely expressed. Expressed in all fetal and adult tissues tested, with highest expression in fetal lung, liver, and kidney, and low expression in all adult tissues.

Its subcellular location is the nucleus. It localises to the nucleolus. Component of RNA polymerase I (Pol I), a DNA-dependent RNA polymerase which synthesizes ribosomal RNA precursors using the four ribonucleoside triphosphates as substrates. Through its association with RRN3/TIF-IA may be involved in recruitment of Pol I to rDNA promoters. This Homo sapiens (Human) protein is DNA-directed RNA polymerase I subunit RPA43.